Reading from the N-terminus, the 273-residue chain is Homeobox protein Nkx-2.2 (273 aa).

2 disordered regions span residues 1-56 and 90-131; these read MSLT…LDAV and LAAG…KRKR. The span at 20–38 shows a compositional bias: acidic residues; it reads DTNDEEGSVAEGPEEENEG. Residues 128 to 187 constitute a DNA-binding region (homeobox); the sequence is KRKRRVLFSKAQTYELERRFRQQRYLSAPEREHLASLIRLTPTQVKIWFQNHRYKMKRAR.

It belongs to the NK-2 homeobox family. In terms of assembly, interacts with OLIG2.

It localises to the nucleus. In terms of biological role, transcriptional activator involved in the development of insulin-producting beta cells in the endocrine pancreas. May also be involved in specifying diencephalic neuromeric boundaries, and in controlling the expression of genes that play a role in axonal guidance. Binds to elements within the NEUROD1 promoter. The polypeptide is Homeobox protein Nkx-2.2 (NKX2-2) (Homo sapiens (Human)).